The chain runs to 340 residues: Ketol-acid reductoisomerase (NADP(+)) (340 aa).

One can recognise a KARI N-terminal Rossmann domain in the interval 2–182; that stretch reads ANIYYENHAD…GCTRAGVIET (181 aa). Residues 25–28, serine 51, serine 53, and 83–86 contribute to the NADP(+) site; these read FGSQ and DTAQ. Histidine 108 is a catalytic residue. Residue glycine 134 coordinates NADP(+). A KARI C-terminal knotted domain is found at 183 to 328; sequence TFAEETETDL…RELRRMMPFV (146 aa). The Mg(2+) site is built by aspartate 191, glutamate 195, glutamate 227, and glutamate 231. Serine 252 is a binding site for substrate.

The protein belongs to the ketol-acid reductoisomerase family. The cofactor is Mg(2+).

It catalyses the reaction (2R)-2,3-dihydroxy-3-methylbutanoate + NADP(+) = (2S)-2-acetolactate + NADPH + H(+). The enzyme catalyses (2R,3R)-2,3-dihydroxy-3-methylpentanoate + NADP(+) = (S)-2-ethyl-2-hydroxy-3-oxobutanoate + NADPH + H(+). It functions in the pathway amino-acid biosynthesis; L-isoleucine biosynthesis; L-isoleucine from 2-oxobutanoate: step 2/4. It participates in amino-acid biosynthesis; L-valine biosynthesis; L-valine from pyruvate: step 2/4. Involved in the biosynthesis of branched-chain amino acids (BCAA). Catalyzes an alkyl-migration followed by a ketol-acid reduction of (S)-2-acetolactate (S2AL) to yield (R)-2,3-dihydroxy-isovalerate. In the isomerase reaction, S2AL is rearranged via a Mg-dependent methyl migration to produce 3-hydroxy-3-methyl-2-ketobutyrate (HMKB). In the reductase reaction, this 2-ketoacid undergoes a metal-dependent reduction by NADPH to yield (R)-2,3-dihydroxy-isovalerate. This Roseiflexus castenholzii (strain DSM 13941 / HLO8) protein is Ketol-acid reductoisomerase (NADP(+)).